The following is a 202-amino-acid chain: MTSSNSNSSREVSLERKTGETDIKLSVNLDGSGAGKRDSGIGFLDHMLDLLAKHALIDLTVEAKGDLHVDDHHTAEDIGIALGTAVDRALGDRAGVRRYGHFTLPMDECLVTSAVDMGGRYAFEYNAPIAASKIGTFDSELVEHFWQSFAVNAKCNLHVLLHHGSNGHHISECVFKATARAIRMAVESDPRSDAIPSTKGVL.

This sequence belongs to the imidazoleglycerol-phosphate dehydratase family.

Its subcellular location is the cytoplasm. It catalyses the reaction D-erythro-1-(imidazol-4-yl)glycerol 3-phosphate = 3-(imidazol-4-yl)-2-oxopropyl phosphate + H2O. Its pathway is amino-acid biosynthesis; L-histidine biosynthesis; L-histidine from 5-phospho-alpha-D-ribose 1-diphosphate: step 6/9. The protein is Imidazoleglycerol-phosphate dehydratase of Rhodopirellula baltica (strain DSM 10527 / NCIMB 13988 / SH1).